The following is a 126-amino-acid chain: Holo-[acyl-carrier-protein] synthase (126 aa).

D9 and E58 together coordinate Mg(2+).

It belongs to the P-Pant transferase superfamily. AcpS family. Requires Mg(2+) as cofactor.

It localises to the cytoplasm. The enzyme catalyses apo-[ACP] + CoA = holo-[ACP] + adenosine 3',5'-bisphosphate + H(+). Its function is as follows. Transfers the 4'-phosphopantetheine moiety from coenzyme A to a Ser of acyl-carrier-protein. The polypeptide is Holo-[acyl-carrier-protein] synthase (Escherichia coli (strain K12 / MC4100 / BW2952)).